Consider the following 714-residue polypeptide: Inducible lysine decarboxylase (714 aa).

An N6-(pyridoxal phosphate)lysine modification is found at Lys-367.

Belongs to the Orn/Lys/Arg decarboxylase class-I family. As to quaternary structure, homodecamer. Interacts with RavA. Requires pyridoxal 5'-phosphate as cofactor.

It localises to the cytoplasm. It carries out the reaction L-lysine + H(+) = cadaverine + CO2. The sequence is that of Inducible lysine decarboxylase (cadA) from Salmonella typhi.